Reading from the N-terminus, the 156-residue chain is MPRKGYTKRQEILPDPIYNSKLVSRLINKLMLDGKRGTASTILYDAFDRIKEATGNDPLEVFEQAMENIMPVLEVKARRVGGSNYQVPIEVRPDRRSTLGLRWLVNYSRLRNEHTMDERLAKEIMDAANDTGASVKKREDTHKMAEANRAFAHYRW.

It belongs to the universal ribosomal protein uS7 family. Part of the 30S ribosomal subunit. Contacts proteins S9 and S11.

In terms of biological role, one of the primary rRNA binding proteins, it binds directly to 16S rRNA where it nucleates assembly of the head domain of the 30S subunit. Is located at the subunit interface close to the decoding center, probably blocks exit of the E-site tRNA. The sequence is that of Small ribosomal subunit protein uS7 from Leuconostoc mesenteroides subsp. mesenteroides (strain ATCC 8293 / DSM 20343 / BCRC 11652 / CCM 1803 / JCM 6124 / NCDO 523 / NBRC 100496 / NCIMB 8023 / NCTC 12954 / NRRL B-1118 / 37Y).